The chain runs to 519 residues: Cytochrome P450 52E2 (519 aa).

The next 2 membrane-spanning stretches (helical) occupy residues 10-30 and 44-64; these read MLGG…FYFI and PIFF…NAWF. Residue Cys-461 participates in heme binding.

This sequence belongs to the cytochrome P450 family. Heme is required as a cofactor.

It localises to the membrane. Together with an NADPH cytochrome P450 the enzyme system catalyzes the terminal hydroxylation as the first step in the assimilation of alkanes and fatty acids. The sequence is that of Cytochrome P450 52E2 (CYP52E2) from Candida apicola (Yeast).